Reading from the N-terminus, the 357-residue chain is Phosphoribosylformylglycinamidine cyclo-ligase (357 aa).

It belongs to the AIR synthase family.

The protein resides in the cytoplasm. It carries out the reaction 2-formamido-N(1)-(5-O-phospho-beta-D-ribosyl)acetamidine + ATP = 5-amino-1-(5-phospho-beta-D-ribosyl)imidazole + ADP + phosphate + H(+). It functions in the pathway purine metabolism; IMP biosynthesis via de novo pathway; 5-amino-1-(5-phospho-D-ribosyl)imidazole from N(2)-formyl-N(1)-(5-phospho-D-ribosyl)glycinamide: step 2/2. This chain is Phosphoribosylformylglycinamidine cyclo-ligase, found in Rhizobium johnstonii (strain DSM 114642 / LMG 32736 / 3841) (Rhizobium leguminosarum bv. viciae).